A 354-amino-acid polypeptide reads, in one-letter code: S-adenosylmethionine:tRNA ribosyltransferase-isomerase (354 aa).

Belongs to the QueA family. In terms of assembly, monomer.

It localises to the cytoplasm. The catalysed reaction is 7-aminomethyl-7-carbaguanosine(34) in tRNA + S-adenosyl-L-methionine = epoxyqueuosine(34) in tRNA + adenine + L-methionine + 2 H(+). Its pathway is tRNA modification; tRNA-queuosine biosynthesis. In terms of biological role, transfers and isomerizes the ribose moiety from AdoMet to the 7-aminomethyl group of 7-deazaguanine (preQ1-tRNA) to give epoxyqueuosine (oQ-tRNA). In Azorhizobium caulinodans (strain ATCC 43989 / DSM 5975 / JCM 20966 / LMG 6465 / NBRC 14845 / NCIMB 13405 / ORS 571), this protein is S-adenosylmethionine:tRNA ribosyltransferase-isomerase.